Here is a 350-residue protein sequence, read N- to C-terminus: ATPase GET3 (350 aa).

26–33 (KGGVGKTT) serves as a coordination point for ATP. Residue D57 is part of the active site. ATP contacts are provided by E243 and N270. Zn(2+) is bound by residues C282 and C285.

It belongs to the arsA ATPase family. As to quaternary structure, homodimer. Component of the Golgi to ER traffic (GET) complex, which is composed of GET1, GET2 and GET3. Within the complex, GET1 and GET2 form a heterotetramer which is stabilized by phosphatidylinositol binding and which binds to the GET3 homodimer. Interacts with the chloride channel protein GEF1.

It localises to the cytoplasm. Its subcellular location is the endoplasmic reticulum. The protein resides in the golgi apparatus. Functionally, ATPase required for the post-translational delivery of tail-anchored (TA) proteins to the endoplasmic reticulum. Recognizes and selectively binds the transmembrane domain of TA proteins in the cytosol. This complex then targets to the endoplasmic reticulum by membrane-bound receptors GET1 and GET2, where the tail-anchored protein is released for insertion. This process is regulated by ATP binding and hydrolysis. ATP binding drives the homodimer towards the closed dimer state, facilitating recognition of newly synthesized TA membrane proteins. ATP hydrolysis is required for insertion. Subsequently, the homodimer reverts towards the open dimer state, lowering its affinity for the GET1-GET2 receptor, and returning it to the cytosol to initiate a new round of targeting. Cooperates with the HDEL receptor ERD2 to mediate the ATP-dependent retrieval of resident ER proteins that contain a C-terminal H-D-E-L retention signal from the Golgi to the ER. Involved in low-level resistance to the oxyanions arsenite and arsenate, and in heat tolerance. The sequence is that of ATPase GET3 from Candida albicans (strain SC5314 / ATCC MYA-2876) (Yeast).